The sequence spans 497 residues: RNA polymerase sigma factor SigA (497 aa).

Disordered regions lie at residues 1–20 and 62–86; these read MSTDKKTLGEKPNSTKPELS and KTLHENKESDVPKKRRGRKPKHAPL. A compositionally biased stretch (basic and acidic residues) spans 63 to 73; that stretch reads TLHENKESDVP. The segment covering 74-84 has biased composition (basic residues); that stretch reads KKRRGRKPKHA. A sigma-70 factor domain-2 region spans residues 250–320; that stretch reads LVTSNLRLVV…TRAIADQART (71 aa). The Interaction with polymerase core subunit RpoC signature appears at 274 to 277; it reads DLIQ. The sigma-70 factor domain-3 stretch occupies residues 329 to 410; that stretch reads ETINRLAKAE…DTDAQTPDEF (82 aa). The tract at residues 423-478 is sigma-70 factor domain-4; that stretch reads LLNNNLSEQEELIVRMRIGMPPYNEPKTLDEVGQKILIPREKIRQIENKAIRKLRH. Residues 451–470 constitute a DNA-binding region (H-T-H motif); sequence LDEVGQKILIPREKIRQIEN.

This sequence belongs to the sigma-70 factor family. RpoD/SigA subfamily. In terms of assembly, interacts transiently with the RNA polymerase catalytic core.

The protein resides in the cytoplasm. In terms of biological role, sigma factors are initiation factors that promote the attachment of RNA polymerase to specific initiation sites and are then released. This sigma factor is the primary sigma factor during exponential growth. The polypeptide is RNA polymerase sigma factor SigA (Mycoplasma genitalium (strain ATCC 33530 / DSM 19775 / NCTC 10195 / G37) (Mycoplasmoides genitalium)).